We begin with the raw amino-acid sequence, 158 residues long: Botcinic acid biosynthesis cluster B protein 16 (158 aa).

The protein operates within polyketide biosynthesis. Part of the gene cluster B that mediates the biosynthesis of botcinic acid and its botcinin derivatives, acetate-derived polyketides that contribute to virulence when combined with the sesquiterpene botrydial. Botcinic acid and its derivatives have been shown to induce chlorosis and necrosis during host plant infection, but also have antifungal activities. Two polyketide synthases, BOA6 and BOA9, are involved in the biosynthesis of botcinins. BOA6 mediates the formation of the per-methylated tetraketide core by condensation of four units of malonyl-CoA with one unit of acetyl-CoA, which would be methylated in activated methylene groups to yield a bicyclic acid intermediate that could then either be converted to botrylactone derivatives or lose the starter acetate unit through a retro-Claisen type C-C bond cleavage to yield botcinin derivatives. The second polyketide synthase, BOA9, is probably required for the biosynthesis of the tetraketide side chain of botcinins. The methyltransferase (MT) domain within BOA6 is probably responsible for the incorporation of four methyl groups. The trans-enoyl reductase BOA5 might take over the enoyl reductase function of BOA6 that misses an ER domain. The monooxygenases BOA2, BOA3 and BOA4 might be involved in further hydroxylations at C4, C5 and C8, whereas BOA7, close to BOA9, could potentially be involved in the hydroxylation at C4 in the side chain of botcinins. This chain is Botcinic acid biosynthesis cluster B protein 16, found in Botryotinia fuckeliana (strain B05.10) (Noble rot fungus).